The chain runs to 115 residues: Large ribosomal subunit protein bL19 (115 aa).

It belongs to the bacterial ribosomal protein bL19 family.

Its function is as follows. This protein is located at the 30S-50S ribosomal subunit interface and may play a role in the structure and function of the aminoacyl-tRNA binding site. This Desulforapulum autotrophicum (strain ATCC 43914 / DSM 3382 / VKM B-1955 / HRM2) (Desulfobacterium autotrophicum) protein is Large ribosomal subunit protein bL19.